Consider the following 604-residue polypeptide: ATPase family AAA domain-containing protein 3A homolog (604 aa).

The interval 1-50 (MSWLLGRNRQQPQPDQTAGFSEGGGAADPEGRTAGEKSGDSQLSRAERKA) is disordered. Residues 8 to 19 (NRQQPQPDQTAG) show a composition bias toward polar residues. The segment covering 29 to 50 (PEGRTAGEKSGDSQLSRAERKA) has biased composition (basic and acidic residues). The stretch at 62 to 221 (ERAADAAKTL…INLEKIRLKA (160 aa)) forms a coiled coil. Residue 358-365 (GPPGTGKT) participates in ATP binding.

In terms of assembly, can form homooligomers.

It is found in the mitochondrion inner membrane. The protein resides in the mitochondrion matrix. The protein localises to the mitochondrion nucleoid. In terms of biological role, required to maintain the proper number of mitochondria in neurons and muscles. The chain is ATPase family AAA domain-containing protein 3A homolog from Drosophila melanogaster (Fruit fly).